Reading from the N-terminus, the 590-residue chain is MGQERPNDEERPESRDLGVYGCSPPHSPRLGPTRFYVFAGDPNPKQTIKRCKRKRIQACNDQRTAKTAIGVMAILGFFCLVNWFMLSRLHEGRVWLRRGLSENPKHVSAQNEERKKFEKQKMKYNGTYGRMLSLATDALAEGMRDNRYCNGFDFEQNKLETKDLWQEPKEQASAWKPCADQRSLTPDDGKNGYIMVTANGGINQQRVAVCNIVVVARLLNAALVIPKFMLSDVWTDASQFGDIYQEEHFMEYLSPDIRIVKELPKELQSLNLEEIGSVVTDIEVMKEAKPDFYMTHILPILLKNRVIHFVGFGNRLAFDPLPFELQRLRCRCNFHALNFVPRIQETAALLVKRLRGSGSYYLALHLRFEIDMVAHSLCYFGGGETEQKELDSYRQKHFPSLSTLTRKKKFRSADVLRTEGLCPLTPEEAVLMLAALGFNRETRVFVAGANIYGGSKRLAVLTSLYPNLVTKEKLLTESELQPFKNFSSQLAALDFIACAAADAFAMTDSGSQLSSLVSGYRIYYGGGKLPTIRPNKRRLSDILLKNSTIEWNVFEKRVRKAIRQTKHVFARPNGRSVYRYPRCKECMCHA.

The span at 1–16 shows a compositional bias: basic and acidic residues; that stretch reads MGQERPNDEERPESRD. The segment at 1 to 26 is disordered; it reads MGQERPNDEERPESRDLGVYGCSPPH. The helical; Signal-anchor for type II membrane protein transmembrane segment at 67–87 threads the bilayer; sequence TAIGVMAILGFFCLVNWFMLS. An N-linked (GlcNAc...) asparagine glycan is attached at Asn-125. 365–367 is a binding site for substrate; the sequence is HLR. N-linked (GlcNAc...) asparagine glycans are attached at residues Asn-485 and Asn-546.

The protein belongs to the glycosyltransferase GT106 family.

It localises to the membrane. It participates in glycan metabolism. The polypeptide is O-fucosyltransferase 2 (Arabidopsis thaliana (Mouse-ear cress)).